We begin with the raw amino-acid sequence, 123 residues long: Small ribosomal subunit protein uS12cz/uS12cy (123 aa).

Belongs to the universal ribosomal protein uS12 family. Part of the 30S ribosomal subunit.

The protein localises to the plastid. It is found in the chloroplast. With S4 and S5 plays an important role in translational accuracy. Located at the interface of the 30S and 50S subunits. The sequence is that of Small ribosomal subunit protein uS12cz/uS12cy (rps12-A) from Nymphaea alba (White water-lily).